The following is a 325-amino-acid chain: tRNA N6-adenosine threonylcarbamoyltransferase (325 aa).

Residues His-110 and His-114 each contribute to the Fe cation site. Substrate-binding positions include 133–137 (MVSGG), Asp-165, Gly-178, and Asn-268. Asp-296 contributes to the Fe cation binding site.

This sequence belongs to the KAE1 / TsaD family. Fe(2+) is required as a cofactor.

Its subcellular location is the cytoplasm. It carries out the reaction L-threonylcarbamoyladenylate + adenosine(37) in tRNA = N(6)-L-threonylcarbamoyladenosine(37) in tRNA + AMP + H(+). In terms of biological role, required for the formation of a threonylcarbamoyl group on adenosine at position 37 (t(6)A37) in tRNAs that read codons beginning with adenine. Is involved in the transfer of the threonylcarbamoyl moiety of threonylcarbamoyl-AMP (TC-AMP) to the N6 group of A37, together with TsaE and TsaB. TsaD likely plays a direct catalytic role in this reaction. This chain is tRNA N6-adenosine threonylcarbamoyltransferase, found in Thermosipho melanesiensis (strain DSM 12029 / CIP 104789 / BI429).